A 159-amino-acid chain; its full sequence is Phosphopantetheine adenylyltransferase (159 aa).

Position 10 (Thr-10) interacts with substrate. Residues 10 to 11 (TF) and His-18 each bind ATP. Substrate contacts are provided by Lys-42, Leu-74, and Arg-88. Residues 89 to 91 (GLR), Glu-99, and 124 to 130 (NSFISST) each bind ATP.

It belongs to the bacterial CoaD family. In terms of assembly, homohexamer. Mg(2+) is required as a cofactor.

The protein localises to the cytoplasm. The enzyme catalyses (R)-4'-phosphopantetheine + ATP + H(+) = 3'-dephospho-CoA + diphosphate. It functions in the pathway cofactor biosynthesis; coenzyme A biosynthesis; CoA from (R)-pantothenate: step 4/5. Reversibly transfers an adenylyl group from ATP to 4'-phosphopantetheine, yielding dephospho-CoA (dPCoA) and pyrophosphate. The chain is Phosphopantetheine adenylyltransferase from Shewanella pealeana (strain ATCC 700345 / ANG-SQ1).